Here is a 1432-residue protein sequence, read N- to C-terminus: Probable ATP-dependent RNA helicase spindle-E (1432 aa).

The Helicase ATP-binding domain occupies 124 to 291; sequence LAAINAHPVV…FTTTNSVPPV (168 aa). 137 to 144 is a binding site for ATP; the sequence is GQTGCGKT. The DEAH box motif lies at 237–240; that stretch reads DEVH. A Helicase C-terminal domain is found at 337–524; it reads KIIMVIDNME…NSVLRAKELE (188 aa). Residues 936 to 999 enclose the Tudor domain; the sequence is AGAITKGMMV…RLMPKELIQQ (64 aa).

It belongs to the DEAD box helicase family. DEAH subfamily.

It is found in the cytoplasm. It catalyses the reaction ATP + H2O = ADP + phosphate + H(+). Probable ATP-binding RNA helicase which plays a central role during spermatogenesis and oogenesis by repressing transposable elements and preventing their mobilization, which is essential for the germline integrity. Acts via the piRNA metabolic process, which mediates the repression of transposable elements during meiosis by forming complexes composed of piRNAs and Piwi and govern the methylation and subsequent repression of transposons. Involved in the repression of LTR retrotransposon copia. Also involved in telomere regulation by repressing specialized telomeric retroelements HeT-A, TAHRE, and TART; Drosophila telomeres being maintained by transposition of specialized telomeric retroelements. Involved in telomeric trans-silencing, a repression mechanism by which a transposon or a transgene inserted in subtelomeric heterochromatin has the capacity to repress in trans in the female germline, a homologous transposon, or transgene located in euchromatin. Involved in the repression of testis-expressed Stellate genes by the homologous Su(Ste) repeats. Required for anteroposterior and dorsoventral axis formation during oogenesis. This is Probable ATP-dependent RNA helicase spindle-E (spn-E) from Drosophila erecta (Fruit fly).